The sequence spans 596 residues: MRVSRLMLNTLRDVPSEADIISHQLLVRGGYIKRITGGIYAYMPLLWKVLKKITSIVEEELSTKGCLQTLLPQLQPSEIWERSGRWKSYTQGEGIMFSLKDRQGKELGLGPTHEEVITQIISQTIHSYKQLPINIFQIQTKFRDEIRPRFGLMRSREFIMKDAYSFHANENDLQSTYSDMRNAYQNIFTKCGLDFVCVDADSGAIGGAASQEFMVTAESGEDLILISSDGKYGANQEKAVSIIEEGNLLEPNKPSIIKTPNQKTIDELCNYNDFHPSQIVKVLAYLATCDDNKKYPVLVSIRGDQEINDIKLSNKISQELKKNVLDIRIIYNEDMQKQGITNIPFGFIGPDLSDNLLAQSKGWEKKFIRIADNSAKDLKSFICGNNIKDEHKIFYNWNLINTVQLICDIRKAKPGDRCIHDKTQKLEECRGIEIGHIFQLGTKYSKSLNATFTNEKGIEDHLWMGCYGIGISRLAQAAVEQNHDDLGIIWPTSIAPFTVIIIIANIKNNDQKCLAEDIYQKLIQNRVDVLLDDRDDRAGIKFKDADLIGIPWRIVAGREASSGLVELHNRKTKTTELLDLNSVLKKLSEEFNTEKL.

The protein belongs to the class-II aminoacyl-tRNA synthetase family. ProS type 1 subfamily. Homodimer.

Its subcellular location is the cytoplasm. The catalysed reaction is tRNA(Pro) + L-proline + ATP = L-prolyl-tRNA(Pro) + AMP + diphosphate. In terms of biological role, catalyzes the attachment of proline to tRNA(Pro) in a two-step reaction: proline is first activated by ATP to form Pro-AMP and then transferred to the acceptor end of tRNA(Pro). As ProRS can inadvertently accommodate and process non-cognate amino acids such as alanine and cysteine, to avoid such errors it has two additional distinct editing activities against alanine. One activity is designated as 'pretransfer' editing and involves the tRNA(Pro)-independent hydrolysis of activated Ala-AMP. The other activity is designated 'posttransfer' editing and involves deacylation of mischarged Ala-tRNA(Pro). The misacylated Cys-tRNA(Pro) is not edited by ProRS. The polypeptide is Proline--tRNA ligase (Prochlorococcus marinus (strain NATL1A)).